The sequence spans 751 residues: Photosystem I P700 chlorophyll a apoprotein A1 (751 aa).

8 consecutive transmembrane segments (helical) span residues valine 73–alanine 96, leucine 159–histidine 182, leucine 198–leucine 222, threonine 294–tyrosine 312, tryptophan 349–tyrosine 372, leucine 388–isoleucine 414, alanine 436–histidine 458, and phenylalanine 533–leucine 551. Residues cysteine 575 and cysteine 584 each contribute to the [4Fe-4S] cluster site. Transmembrane regions (helical) follow at residues histidine 591–tryptophan 612 and leucine 665–phenylalanine 687. Histidine 676 lines the chlorophyll a' pocket. Methionine 684 and tyrosine 692 together coordinate chlorophyll a. Tryptophan 693 serves as a coordination point for phylloquinone. Residues alanine 725–alanine 745 form a helical membrane-spanning segment.

This sequence belongs to the PsaA/PsaB family. In terms of assembly, the PsaA/B heterodimer binds the P700 chlorophyll special pair and subsequent electron acceptors. PSI consists of a core antenna complex that captures photons, and an electron transfer chain that converts photonic excitation into a charge separation. The eukaryotic PSI reaction center is composed of at least 11 subunits. P700 is a chlorophyll a/chlorophyll a' dimer, A0 is one or more chlorophyll a, A1 is one or both phylloquinones and FX is a shared 4Fe-4S iron-sulfur center. is required as a cofactor.

The protein localises to the plastid. It is found in the chloroplast thylakoid membrane. It carries out the reaction reduced [plastocyanin] + hnu + oxidized [2Fe-2S]-[ferredoxin] = oxidized [plastocyanin] + reduced [2Fe-2S]-[ferredoxin]. Functionally, psaA and PsaB bind P700, the primary electron donor of photosystem I (PSI), as well as the electron acceptors A0, A1 and FX. PSI is a plastocyanin/cytochrome c6-ferredoxin oxidoreductase, converting photonic excitation into a charge separation, which transfers an electron from the donor P700 chlorophyll pair to the spectroscopically characterized acceptors A0, A1, FX, FA and FB in turn. Oxidized P700 is reduced on the lumenal side of the thylakoid membrane by plastocyanin or cytochrome c6. In Tupiella akineta (Green alga), this protein is Photosystem I P700 chlorophyll a apoprotein A1.